The primary structure comprises 312 residues: MAWENQTFNSDFLLLGIFNHSPTHTFLFFLVLAIFSVAFMGNSIMVLLIYLDTQLHTPMYFLLSQLSLMDLMLICTTVPKMAFNYLSGSKSISMAGCATQIFFYISLLGSECFLLAVMSYDRYTAICHPLRYTNLMRPKICGLMTAFSWILGSTDGIIDAVATFSFSYCGSREIAHFCCDFPSLLILSCNDTSIFEEVIFICCIVMLVFPVAIIITSYARVILAVIHMGSGEGRRKAFTTCSSHLMVVGMYYGAGLFMCIQPTSHHSPMQDKMVSVFYTIVTPMLNPLIYSLRNKEVTRALMKILGKGKSGD.

Topologically, residues 1–25 are extracellular; sequence MAWENQTFNSDFLLLGIFNHSPTHT. An N-linked (GlcNAc...) asparagine glycan is attached at Asn5. A helical membrane pass occupies residues 26-49; it reads FLFFLVLAIFSVAFMGNSIMVLLI. At 50 to 57 the chain is on the cytoplasmic side; it reads YLDTQLHT. The helical transmembrane segment at 58-79 threads the bilayer; sequence PMYFLLSQLSLMDLMLICTTVP. Over 80–100 the chain is Extracellular; it reads KMAFNYLSGSKSISMAGCATQ. A disulfide bridge connects residues Cys97 and Cys189. Residues 101-120 form a helical membrane-spanning segment; it reads IFFYISLLGSECFLLAVMSY. The Cytoplasmic segment spans residues 121-139; that stretch reads DRYTAICHPLRYTNLMRPK. The chain crosses the membrane as a helical span at residues 140 to 158; it reads ICGLMTAFSWILGSTDGII. The Extracellular segment spans residues 159–195; it reads DAVATFSFSYCGSREIAHFCCDFPSLLILSCNDTSIF. The chain crosses the membrane as a helical span at residues 196 to 219; the sequence is EEVIFICCIVMLVFPVAIIITSYA. The Cytoplasmic portion of the chain corresponds to 220–236; the sequence is RVILAVIHMGSGEGRRK. The chain crosses the membrane as a helical span at residues 237-259; it reads AFTTCSSHLMVVGMYYGAGLFMC. Topologically, residues 260-272 are extracellular; sequence IQPTSHHSPMQDK. Residues 273-292 form a helical membrane-spanning segment; that stretch reads MVSVFYTIVTPMLNPLIYSL. Residues 293-311 are Cytoplasmic-facing; that stretch reads RNKEVTRALMKILGKGKSG.

The protein belongs to the G-protein coupled receptor 1 family.

The protein localises to the cell membrane. Odorant receptor. The polypeptide is Olfactory receptor 2M7 (OR2M7) (Homo sapiens (Human)).